A 56-amino-acid polypeptide reads, in one-letter code: Conotoxin Cal6.41a (56 aa).

Positions 1 to 23 (MSGSGAMLLGLLILVAMATSLDT) are cleaved as a signal peptide. 3 cysteine pairs are disulfide-bonded: Cys27–Cys41, Cys33–Cys50, and Cys40–Cys54.

In terms of tissue distribution, expressed by the venom duct.

The protein resides in the secreted. Probable neurotoxin. This Californiconus californicus (California cone) protein is Conotoxin Cal6.41a.